A 295-amino-acid chain; its full sequence is Accessory protein VasW (295 aa).

In terms of biological role, plays an accessory role in VasX-mediated bacterial killing. The chain is Accessory protein VasW from Vibrio cholerae serotype O1 (strain ATCC 39315 / El Tor Inaba N16961).